The primary structure comprises 180 residues: UPF0227 protein YcfP (180 aa).

This sequence belongs to the UPF0227 family.

The chain is UPF0227 protein YcfP from Escherichia coli O7:K1 (strain IAI39 / ExPEC).